Here is a 163-residue protein sequence, read N- to C-terminus: Lipoprotein signal peptidase (163 aa).

The next 3 membrane-spanning stretches (helical) occupy residues 3 to 23, 70 to 90, and 94 to 114; these read IPLI…IIIL, NYIL…TMYN, and IENF…IGNF. Active-site residues include Asp-125 and Asp-143. The chain crosses the membrane as a helical span at residues 134 to 154; the sequence is WHFATFNIADVSIFIGSVLFI.

It belongs to the peptidase A8 family.

It is found in the cell membrane. It carries out the reaction Release of signal peptides from bacterial membrane prolipoproteins. Hydrolyzes -Xaa-Yaa-Zaa-|-(S,diacylglyceryl)Cys-, in which Xaa is hydrophobic (preferably Leu), and Yaa (Ala or Ser) and Zaa (Gly or Ala) have small, neutral side chains.. The protein operates within protein modification; lipoprotein biosynthesis (signal peptide cleavage). In terms of biological role, this protein specifically catalyzes the removal of signal peptides from prolipoproteins. The sequence is that of Lipoprotein signal peptidase from Buchnera aphidicola subsp. Baizongia pistaciae (strain Bp).